We begin with the raw amino-acid sequence, 529 residues long: Tyrosinase (529 aa).

A signal peptide spans Met1 to Gly18. Residues His19–Arg472 are Lumenal-facing. Residues Asn86, Asn111, and Asn161 are each glycosylated (N-linked (GlcNAc...) asparagine). Cu cation-binding residues include His180, His202, and His211. N-linked (GlcNAc...) asparagine glycans are attached at residues Asn230 and Asn336. Positions 362 and 366 each coordinate Cu cation. Asn370 carries N-linked (GlcNAc...) asparagine glycosylation. His389 contacts Cu cation. The chain crosses the membrane as a helical span at residues Ile473 to Thr495. The Cytoplasmic portion of the chain corresponds to Ser496–Val529.

Belongs to the tyrosinase family. As to quaternary structure, forms an OPN3-dependent complex with DCT in response to blue light in melanocytes. The cofactor is Cu(2+). Glycosylated.

It localises to the melanosome membrane. Its subcellular location is the melanosome. It carries out the reaction 2 L-dopa + O2 = 2 L-dopaquinone + 2 H2O. It catalyses the reaction L-tyrosine + O2 = L-dopaquinone + H2O. The catalysed reaction is 2 5,6-dihydroxyindole-2-carboxylate + O2 = 2 indole-5,6-quinone-2-carboxylate + 2 H2O. Functionally, this is a copper-containing oxidase that functions in the formation of pigments such as melanins and other polyphenolic compounds. Catalyzes the initial and rate limiting step in the cascade of reactions leading to melanin production from tyrosine. In addition to hydroxylating tyrosine to DOPA (3,4-dihydroxyphenylalanine), also catalyzes the oxidation of DOPA to DOPA-quinone, and possibly the oxidation of DHI (5,6-dihydroxyindole) to indole-5,6 quinone. The protein is Tyrosinase (TYR) of Felis catus (Cat).